A 102-amino-acid polypeptide reads, in one-letter code: NADH-quinone oxidoreductase subunit K 1 (102 aa).

The next 3 membrane-spanning stretches (helical) occupy residues 5–25 (LYEVLILASILFAMGLACVVA), 30–50 (VIMMLIGIEIMLNAVMLTFVG), and 62–82 (VFSLMIMALTSAEVSLALAMV).

It belongs to the complex I subunit 4L family. In terms of assembly, NDH-1 is composed of 14 different subunits. Subunits NuoA, H, J, K, L, M, N constitute the membrane sector of the complex.

The protein localises to the cell inner membrane. It carries out the reaction a quinone + NADH + 5 H(+)(in) = a quinol + NAD(+) + 4 H(+)(out). In terms of biological role, NDH-1 shuttles electrons from NADH, via FMN and iron-sulfur (Fe-S) centers, to quinones in the respiratory chain. The immediate electron acceptor for the enzyme in this species is believed to be ubiquinone. Couples the redox reaction to proton translocation (for every two electrons transferred, four hydrogen ions are translocated across the cytoplasmic membrane), and thus conserves the redox energy in a proton gradient. The protein is NADH-quinone oxidoreductase subunit K 1 of Geobacter sp. (strain M21).